We begin with the raw amino-acid sequence, 4128 residues long: DNA-dependent protein kinase catalytic subunit (4128 aa).

Lys117 carries the post-translational modification N6-acetyllysine. The HEAT 1 repeat unit spans residues Asp288–Ile323. Phosphoserine occurs at positions 511, 686, 840, and 891. 2 HEAT repeats span residues Gln1001 to Ser1037 and Pro1050 to Phe1086. Position 1062 is a phosphoserine (Ser1062). The residue at position 1206 (Lys1206) is an N6-acetyllysine. Residues Leu1501 to Leu1536 form an interaction with C1D region. Residues Leu1501–Leu1536 are leucine-zipper. Residues Pro1720–Pro1753 form a TPR 1 repeat. Residue Lys1967 is modified to N6-acetyllysine. Residues Tyr2049 to Ser2071 are disordered. Ser2053 bears the Phosphoserine; by autocatalysis mark. Residues Gln2054–Asp2070 are compositionally biased toward basic and acidic residues. Lys2255 is subject to N6-acetyllysine. Residues Leu2432–Glu3213 form a KIP-binding region. Residue Thr2531 is modified to Phosphothreonine. Phosphothreonine; by autocatalysis is present on Thr2605. Ser2608 bears the Phosphoserine; by autocatalysis mark. Residues Thr2614–Gln2635 are disordered. Thr2634 and Thr2643 each carry phosphothreonine; by autocatalysis. A may split the end of the DNA molecule, with the two strands separating around the region region spans residues Glu2738–Gln2766. The region spanning Pro2907–Ser3539 is the FAT domain. TPR repeat units follow at residues Val2921–Thr2954 and Asn2956–Val2983. Ser3206 is modified (phosphoserine). Residues Lys3241, Lys3260, Lys3638, and Lys3642 each carry the N6-acetyllysine modification. In terms of domain architecture, PI3K/PI4K catalytic spans Phe3722–Gly4053. A G-loop region spans residues Val3728–Lys3734. Phosphoserine is present on residues Ser3731 and Ser3821. The interval Gly3919–Asn3927 is catalytic loop. The tract at residues Gly3939 to Thr3964 is activation loop. Ser4026 is modified (phosphoserine). The region spanning Ser4096 to Met4128 is the FATC domain.

Belongs to the PI3/PI4-kinase family. As to quaternary structure, DNA-PK is a heterotrimer of PRKDC and the Ku dimer (composed of XRCC6/Ku70 and XRCC5/Ku86). Formation of this complex may be promoted by interaction with ILF3. Component of the core long-range non-homologous end joining (NHEJ) complex (also named DNA-PK complex) composed of PRKDC, LIG4, XRCC4, XRCC6/Ku70, XRCC5/Ku86 and NHEJ1/XLF. Additional component of the NHEJ complex includes PAXX. Following autophosphorylation, PRKDC dissociates from DNA. Interacts with DNA-PKcs-interacting protein (KIP) with the region upstream the kinase domain. PRKDC alone also interacts with and phosphorylates DCLRE1C, thereby activating the latent endonuclease activity of this protein. Interacts with C1D. Interacts with TTI1 and TELO2. Interacts with CIB1. Interacts with SETX. Interacts with NR4A3; the DNA-dependent protein kinase complex DNA-PK phosphorylates and activates NR4A3 and prevents NR4A3 ubiquitination and degradation. Interacts with BRAT1. Part of the HDP-RNP complex composed of at least HEXIM1, PRKDC, XRCC5, XRCC6, paraspeckle proteins (SFPQ, NONO, PSPC1, RBM14, and MATR3) and NEAT1 RNA. Interacts with KAT5. Post-translationally, autophosphorylated at two clusters, the T2609 cluster and the S2056 cluster. Autophosphorylated on Ser-2053, Thr-2605, Thr-2634 and Thr-2643. Ser-2053 and Thr-2605 are DNA damage-inducible phosphorylation sites (inducible with ionizing radiation, IR) dephosphorylated by PPP5C. Autophosphorylation induces a conformational change that leads to remodeling of the DNA-PK complex, requisite for efficient end processing and DNA repair. Autophosphorylation in trans within DNA-PK complexes loaded on DNA ends leads to the dissociation of PRKDC from DNA and the transition into the short-range NHEJ complex. Autophosphorylation of the T2609 cluster is required for hematopoietic development and protein synthesis in erythrocytes precursors. S-nitrosylated by GAPDH. In terms of processing, polyubiquitinated by RNF144A, leading to proteasomal degradation.

Its subcellular location is the nucleus. The protein resides in the nucleolus. The protein localises to the cytoplasm. It is found in the cytosol. It carries out the reaction L-seryl-[protein] + ATP = O-phospho-L-seryl-[protein] + ADP + H(+). The enzyme catalyses L-threonyl-[protein] + ATP = O-phospho-L-threonyl-[protein] + ADP + H(+). Its activity is regulated as follows. Activity seems to be attenuated by autophosphorylation. Binding to the SL1 region of U3 small nucleolar RNA promotes auto-phosphorylation activity. Inhibited by wortmannin. In terms of biological role, serine/threonine-protein kinase that acts as a molecular sensor for DNA damage. Involved in DNA non-homologous end joining (NHEJ) required for double-strand break (DSB) repair and V(D)J recombination. Must be bound to DNA to express its catalytic properties. Promotes processing of hairpin DNA structures in V(D)J recombination by activation of the hairpin endonuclease artemis (DCLRE1C). Recruited by XRCC5 and XRCC6 to DNA ends and is required to (1) protect and align broken ends of DNA, thereby preventing their degradation, (2) and sequester the DSB for repair by NHEJ. Acts as a scaffold protein to aid the localization of DNA repair proteins to the site of damage. The assembly of the DNA-PK complex at DNA ends is also required for the NHEJ ligation step. Found at the ends of chromosomes, suggesting a further role in the maintenance of telomeric stability and the prevention of chromosomal end fusion. Also involved in modulation of transcription. As part of the DNA-PK complex, involved in the early steps of ribosome assembly by promoting the processing of precursor rRNA into mature 18S rRNA in the small-subunit processome. Binding to U3 small nucleolar RNA, recruits PRKDC and XRCC5/Ku86 to the small-subunit processome. Recognizes the substrate consensus sequence [ST]-Q. Phosphorylates 'Ser-139' of histone variant H2AX, thereby regulating DNA damage response mechanism. Phosphorylates ASF1A, DCLRE1C, c-Abl/ABL1, histone H1, HSPCA, c-jun/JUN, p53/TP53, PARP1, POU2F1, DHX9, FH, SRF, NHEJ1/XLF, XRCC1, XRCC4, XRCC5, XRCC6, WRN, MYC and RFA2. Can phosphorylate C1D not only in the presence of linear DNA but also in the presence of supercoiled DNA. Ability to phosphorylate p53/TP53 in the presence of supercoiled DNA is dependent on C1D. Acts as a regulator of the phosphatidylinositol 3-kinase/protein kinase B signal transduction by mediating phosphorylation of 'Ser-473' of protein kinase B (PKB/AKT1, PKB/AKT2, PKB/AKT3), promoting their activation. Contributes to the determination of the circadian period length by antagonizing phosphorylation of CRY1 'Ser-588' and increasing CRY1 protein stability, most likely through an indirect mechanism. Plays a role in the regulation of DNA virus-mediated innate immune response by assembling into the HDP-RNP complex, a complex that serves as a platform for IRF3 phosphorylation and subsequent innate immune response activation through the cGAS-STING pathway. Also regulates the cGAS-STING pathway by catalyzing phosphorylation of CGAS, thereby impairing CGAS oligomerization and activation. Also regulates the cGAS-STING pathway by mediating phosphorylation of PARP1. The sequence is that of DNA-dependent protein kinase catalytic subunit (Prkdc) from Mus musculus (Mouse).